Consider the following 345-residue polypeptide: Type II restriction enzyme HgiCI (345 aa).

The enzyme catalyses Endonucleolytic cleavage of DNA to give specific double-stranded fragments with terminal 5'-phosphates.. Functionally, a P subtype restriction enzyme that recognizes the double-stranded sequence 5'-GGYRCC-3' and cleaves after G-1. The protein is Type II restriction enzyme HgiCI (hgiCIR) of Herpetosiphon aurantiacus (Herpetosiphon giganteus).